The sequence spans 820 residues: Serine/threonine-protein phosphatase 4 regulatory subunit 3B (820 aa).

The WH1 domain maps to 1–100; the sequence is MSDTRRRVKV…DEIWEKICQV (100 aa). Phosphoserine occurs at positions 117 and 663. The interval 687-820 is disordered; it reads EDDDEEGKAV…SPRKRPRLGS (134 aa). The segment covering 701 to 732 has biased composition (basic and acidic residues); that stretch reads EKSKTEDDFPDSYEKFMETKKAKESEDKENLP. The span at 744 to 789 shows a compositional bias: polar residues; that stretch reads FSHSPSATNGTNSTNSKSVVSQTTPASSNVASSKTTSLATSVTATK. Over residues 798–809 the composition is skewed to acidic residues; it reads YPDDEEEDEEEE. Ser-811 carries the phosphoserine modification.

It belongs to the SMEK family. In terms of assembly, serine/threonine-protein phosphatase 4 (PP4) occurs in different assemblies of the catalytic and one or more regulatory subunits. Component of the PP4 complex PPP4C-PPP4R2-PPP4R3B.

Its subcellular location is the cytoplasm. The protein localises to the cytoskeleton. It is found in the microtubule organizing center. It localises to the centrosome. The protein resides in the nucleus. Functionally, regulatory subunit of serine/threonine-protein phosphatase 4 (PP4). May regulate the activity of PPP4C at centrosomal microtubule organizing centers. This Mus musculus (Mouse) protein is Serine/threonine-protein phosphatase 4 regulatory subunit 3B.